The sequence spans 196 residues: Imidazoleglycerol-phosphate dehydratase (196 aa).

Belongs to the imidazoleglycerol-phosphate dehydratase family.

It is found in the cytoplasm. It carries out the reaction D-erythro-1-(imidazol-4-yl)glycerol 3-phosphate = 3-(imidazol-4-yl)-2-oxopropyl phosphate + H2O. Its pathway is amino-acid biosynthesis; L-histidine biosynthesis; L-histidine from 5-phospho-alpha-D-ribose 1-diphosphate: step 6/9. The protein is Imidazoleglycerol-phosphate dehydratase of Caulobacter sp. (strain K31).